We begin with the raw amino-acid sequence, 260 residues long: Dolichol-phosphate mannosyltransferase subunit 1 (260 aa).

Residues 1-20 (MAAEEASRSSPRFRREPKGR) form a disordered region. A2 is subject to N-acetylalanine. Phosphoserine is present on S9. GDP-alpha-D-mannose-binding residues include P32, Y34, E36, I63, D65, D118, A119, D120, R147, R234, and K240. D120 is a Mg(2+) binding site. D120 contributes to the Mn(2+) binding site.

It belongs to the glycosyltransferase 2 family. In terms of assembly, component of the dolichol-phosphate mannose (DPM) synthase complex composed of DPM1, DPM2 and DPM3; within the complex, directly interacts with DPM3. This interaction may stabilize DPM1. The cofactor is Mg(2+). Requires Mn(2+) as cofactor. Ca(2+) is required as a cofactor.

The protein resides in the endoplasmic reticulum. It carries out the reaction a di-trans,poly-cis-dolichyl phosphate + GDP-alpha-D-mannose = a di-trans,poly-cis-dolichyl beta-D-mannosyl phosphate + GDP. The protein operates within protein modification; protein glycosylation. Transfers mannose from GDP-mannose to dolichol monophosphate to form dolichol phosphate mannose (Dol-P-Man) which is the mannosyl donor in pathways leading to N-glycosylation, glycosyl phosphatidylinositol membrane anchoring, and O-mannosylation of proteins; catalytic subunit of the dolichol-phosphate mannose (DPM) synthase complex. In Bos taurus (Bovine), this protein is Dolichol-phosphate mannosyltransferase subunit 1 (DPM1).